The following is a 1042-amino-acid chain: Probable serine/threonine protein kinase IRE4 (1042 aa).

3 stretches are compositionally biased toward basic and acidic residues: residues 1–10, 102–115, and 314–327; these read MAEENRKDRG, EEIKLRGKNSGKDE, and QRNEAGQKFKRRDK. 3 disordered regions span residues 1 to 75, 90 to 115, and 297 to 327; these read MAEE…GTKL, PPKYACSSTTSSEEIKLRGKNSGKDE, and WGSTPRVDDSGSGYPEYQRNEAGQKFKRRDK. The segment at 402–421 adopts a C2H2-type; atypical zinc-finger fold; it reads CRICEEEVPLFHLEPHSYIC. A Protein kinase domain is found at 670 to 955; the sequence is FEIIKPISRG…AAEVKSHPFF (286 aa). ATP contacts are provided by residues 676 to 684 and Lys699; that span reads ISRGAFGKV. Asp793 serves as the catalytic Proton acceptor. The interval 830 to 850 is disordered; the sequence is ESDVSPRTNSHHFQKNQEEER. Ser854 carries the phosphoserine modification. Residues 956–1042 enclose the AGC-kinase C-terminal domain; the sequence is QGVDWENLAL…KLFFLLLCVF (87 aa).

This sequence belongs to the protein kinase superfamily. AGC Ser/Thr protein kinase family.

The enzyme catalyses L-seryl-[protein] + ATP = O-phospho-L-seryl-[protein] + ADP + H(+). It carries out the reaction L-threonyl-[protein] + ATP = O-phospho-L-threonyl-[protein] + ADP + H(+). This Arabidopsis thaliana (Mouse-ear cress) protein is Probable serine/threonine protein kinase IRE4.